We begin with the raw amino-acid sequence, 118 residues long: Acetylcholine receptor subunit beta (118 aa).

The signal sequence occupies residues 1–15 (APTVALLLLCALCSA).

Belongs to the ligand-gated ion channel (TC 1.A.9) family. Acetylcholine receptor (TC 1.A.9.1) subfamily. Beta-1/CHRNB1 sub-subfamily. Pentamer of two alpha chains, and one each of the beta, delta, and gamma chains.

The protein localises to the postsynaptic cell membrane. It is found in the cell membrane. It carries out the reaction K(+)(in) = K(+)(out). The enzyme catalyses Na(+)(in) = Na(+)(out). Functionally, after binding acetylcholine, the AChR responds by an extensive change in conformation that affects all subunits and leads to opening of an ion-conducting channel across the plasma membrane. The sequence is that of Acetylcholine receptor subunit beta (CHRNB1) from Gallus gallus (Chicken).